The primary structure comprises 1009 residues: MTAQKSKYFNRIMTMNTLLFSLLTVGFSQAYADVVLEKQVKITDDGLHFDGKDLNHGNIDSADPGEKYDFFFGPNISAHGDAVKTYKHYVFMTWYKGGKSERNVMLSRYNTQTQTIATIEFPHRHTGFRGNPLIGESHNTIGLAVSPNNGTIHMVYDLHAYDDNNHDGKFKDDFFRYSFSVENAADLPDDQFTLDKFVKDTSSISQGPDDYKHISMTGDIADKSNFARLTYPKFFTTTDGTLLLYMRLGGNNNGAYVFNRYDEETQTWSKFTKFNENNQKNFGNPYNWGLYGNMKYVNGKLRVGFQQRSSDNNDRYQYQNGVYYAYSDHPEGFGDWKNHKDDEITYPLVNSDEIKVLEPGDYISHQEANSVYIVGSFDWTVTKKGDVHFISKVRSTNRSRPDYEEEYLHSYKPAGADEFITTTDFTGASQIYTAGDNIYIVGLKNGRPYVERAKGGTNDFVRVYEATSGPVFDHGTLYIKDGKVYYYLMEKTSGNAMPLYLQIIDLDLESEANAPQVAFPSTSLTVEQGYEQLSLGIDATSSIEGRTIESVTLYLNDELVRTDTTVPYLFGHASKPHETGAMGWKDEHEPNPNPLGPGEHIFKAVAVDSEGDTGLATMRLTVQSNAPMVSFPTQLIEVDEGYEKLSVSVDASSSVEGRTIESVTLFINGEEVRTDTTIPYLWGHGSKPHETGAMGWREDHAPNPNPFLAGEYVFTAIATDSQGEQSETSMTLIVNGEATPPIVTWPNEVVTVTEGYKRLGITIEAEASSENATIESVTLYRNDELVRVDTKYKWNFGHSFAPYEFGAMGWLETHEPNPSPLLAGTHTFKVVAKDSTGLEGEAFMTLIVLPPAGPSISFDEPDIELMTGYESLSVSTYVATVNESVDIISVALFIDDVLVRENLEAPYVWGDANHPNELLSLEVGSYEFKAIARDTNDQVSEVSLLVSITLFGDFDGDNDVDRTDVRAFSSAIRSGEALDQRYDFNEDGVVDRSDTRGLTKICSRPRCAS.

Positions 1-32 (MTAQKSKYFNRIMTMNTLLFSLLTVGFSQAYA) are cleaved as a signal peptide. Residue 137-138 (SH) coordinates substrate. Residue histidine 138 is the Proton donor/acceptor of the active site. Residues aspartate 200, aspartate 210, and lysine 212 each contribute to the Ca(2+) site. Substrate-binding residues include tyrosine 291 and arginine 308. 3 residues coordinate Ca(2+): aspartate 311, aspartate 314, and tyrosine 316. Residue tyrosine 372 coordinates substrate.

This sequence belongs to the polysaccharide lyase 24 family.

Ulvan lyase involved in ulvan degradation. Ulvan is the main polysaccharide component of the Ulvales (green seaweed) cell wall. It is composed of disaccharide building blocks comprising 3-sulfated rhamnose (Rha3S) linked to D-glucuronic acid (GlcA), L-iduronic acid (IduA), or D-xylose (Xyl). Ulvan lyase catalyzes preferentially the endolytic cleavage of the glycosidic bond between Rha3S and the uronic acid GlcA, but not IduA, producing oligosaccharides that have unsaturated 4-deoxy-L-threo-hex-4-enopyranosiduronic acid (deltaUA) at the non-reducing end. The most abundant end products in the degradation of the ulvan polysaccharide were deltaUA-Rha3S disaccharides and deltaUA-Rha3S-IduA-Rha3S and deltaUA-Rha3S-Xyl-Rha3S tetrasaccharides. The polypeptide is Ulvan lyase, long isoform (ullA) (Glaciecola sp. (strain KUL10)).